We begin with the raw amino-acid sequence, 1208 residues long: DNA-directed RNA polymerase subunit beta (1208 aa).

The segment at glutamate 1182–aspartate 1208 is disordered.

The protein belongs to the RNA polymerase beta chain family. The RNAP catalytic core consists of 2 alpha, 1 beta, 1 beta' and 1 omega subunit. When a sigma factor is associated with the core the holoenzyme is formed, which can initiate transcription.

The enzyme catalyses RNA(n) + a ribonucleoside 5'-triphosphate = RNA(n+1) + diphosphate. In terms of biological role, DNA-dependent RNA polymerase catalyzes the transcription of DNA into RNA using the four ribonucleoside triphosphates as substrates. The chain is DNA-directed RNA polymerase subunit beta from Enterococcus faecium (Streptococcus faecium).